We begin with the raw amino-acid sequence, 452 residues long: Low-affinity putrescine importer PlaP (452 aa).

At 1–16 (MSHNVTPNTSRVELRK) the chain is on the cytoplasmic side. A helical membrane pass occupies residues 17 to 37 (TLTLVPVVMMGLAYMQPMTLF). The Periplasmic portion of the chain corresponds to 38–48 (DTFGIVSGLTD). The helical transmembrane segment at 49-69 (GHVPTAYAFALIAILFTALSY) threads the bilayer. Residues 70 to 95 (GKLVRRYPSAGSAYTYAQKSISPTVG) are Cytoplasmic-facing. The chain crosses the membrane as a helical span at residues 96-116 (FMVGWSSLLDYLFAPMINILL). The Periplasmic segment spans residues 117-123 (AKIYFEA). A helical membrane pass occupies residues 124–144 (LVPSIPSWMFVVALVAFMTAF). Over 145 to 158 (NLRSLKSVANFNTV) the chain is Cytoplasmic. A helical transmembrane segment spans residues 159-179 (IVVLQVVLIAVILGMVVYGVF). Topologically, residues 180–199 (EGEGAGTLASTRPFWSGDAH) are periplasmic. Residues 200 to 220 (VIPMITGATILCFSFTGFDGI) form a helical membrane-spanning segment. The Cytoplasmic portion of the chain corresponds to 221 to 237 (SNLSEETKDAERVIPRA). Residues 238–258 (IFLTALIGGMIFIFATYFLQL) form a helical membrane-spanning segment. The Periplasmic portion of the chain corresponds to 259–283 (YFPDISRFKDPDASQPEIMLYVAGK). The chain crosses the membrane as a helical span at residues 284–304 (AFQVGALIFSTITVLASGMAA). Over 305 to 339 (HAGVARLMYVMGRDGVFPKSFFGYVHPKWRTPAMN) the chain is Cytoplasmic. 2 helical membrane-spanning segments follow: residues 340–360 (IILV…MATA) and 361–381 (LINF…ISQF). The Cytoplasmic segment spans residues 382–394 (WIREKRNKTLKDH). A helical membrane pass occupies residues 395 to 415 (FQYLFLPMCGALTVGALWVNL). Residues 416-417 (EE) lie on the Periplasmic side of the membrane. Residues 418–438 (SSMVLGLIWAAIGLIYLACVT) form a helical membrane-spanning segment. The Cytoplasmic portion of the chain corresponds to 439–452 (KSFRNPVPQYEDVA).

This sequence belongs to the amino acid-polyamine-organocation (APC) superfamily.

It localises to the cell inner membrane. It carries out the reaction putrescine(in) + H(+)(in) = putrescine(out) + H(+)(out). In terms of biological role, putrescine importer. The polypeptide is Low-affinity putrescine importer PlaP (plaP) (Escherichia coli O157:H7).